The primary structure comprises 388 residues: Na(+)/H(+) antiporter NhaA (388 aa).

A run of 12 helical transmembrane segments spans residues 8–28, 33–53, 59–79, 95–115, 125–145, 154–174, 179–199, 217–237, 259–279, 287–307, 328–348, and 363–383; these read FLKL…IALI, PLQG…FAAL, LLLW…GLEV, LFPV…YLLF, GWAI…ALLS, VFLL…IALF, VSLV…WMNW, VCIL…GFLI, VAYL…LNGV, ILPL…IFLF, IFAV…ISGL, and LGIL…LRMV.

It belongs to the NhaA Na(+)/H(+) (TC 2.A.33) antiporter family.

It is found in the cell inner membrane. The catalysed reaction is Na(+)(in) + 2 H(+)(out) = Na(+)(out) + 2 H(+)(in). In terms of biological role, na(+)/H(+) antiporter that extrudes sodium in exchange for external protons. This is Na(+)/H(+) antiporter NhaA from Photorhabdus laumondii subsp. laumondii (strain DSM 15139 / CIP 105565 / TT01) (Photorhabdus luminescens subsp. laumondii).